A 261-amino-acid polypeptide reads, in one-letter code: Pantothenate synthetase (261 aa).

29 to 36 is an ATP binding site; that stretch reads MGALHNGH. The Proton donor role is filled by histidine 36. Residue glutamine 60 coordinates (R)-pantoate. A beta-alanine-binding site is contributed by glutamine 60. 147–150 contacts ATP; that stretch reads GEKD. Glutamine 153 provides a ligand contact to (R)-pantoate. Residue 184–187 coordinates ATP; sequence LSSR.

The protein belongs to the pantothenate synthetase family. As to quaternary structure, homodimer.

It localises to the cytoplasm. The enzyme catalyses (R)-pantoate + beta-alanine + ATP = (R)-pantothenate + AMP + diphosphate + H(+). The protein operates within cofactor biosynthesis; (R)-pantothenate biosynthesis; (R)-pantothenate from (R)-pantoate and beta-alanine: step 1/1. Its function is as follows. Catalyzes the condensation of pantoate with beta-alanine in an ATP-dependent reaction via a pantoyl-adenylate intermediate. This Francisella tularensis subsp. tularensis (strain FSC 198) protein is Pantothenate synthetase.